We begin with the raw amino-acid sequence, 549 residues long: Glucose-6-phosphate isomerase (549 aa).

The active-site Proton donor is glutamate 355. Active-site residues include histidine 386 and lysine 514.

Belongs to the GPI family.

It localises to the cytoplasm. The enzyme catalyses alpha-D-glucose 6-phosphate = beta-D-fructose 6-phosphate. It functions in the pathway carbohydrate biosynthesis; gluconeogenesis. It participates in carbohydrate degradation; glycolysis; D-glyceraldehyde 3-phosphate and glycerone phosphate from D-glucose: step 2/4. Catalyzes the reversible isomerization of glucose-6-phosphate to fructose-6-phosphate. This Buchnera aphidicola subsp. Acyrthosiphon pisum (strain 5A) protein is Glucose-6-phosphate isomerase.